A 405-amino-acid chain; its full sequence is MTQSQYRPGPDANGLFGSFGGRYVAETLMPLVLDLAREYEAAKADPKFLEELAYFQRDYIGRPNPLYFAERLTEHCGGAKIFFKREELNHTGAHKVNNCIGQVLLAKRMGKKRLIAETGAGMHGVATATVAARFGLPCVIYMGATDIERQQANVFRMKLLGAEIVPVTAGTGTLKDAMNEALRDWVTNVEDTFYLIGTVAGPHPYPAMVRDFQSIIGKETRAQLQEKEGRLPDSLVACVGGGSNAMGLFHEFLEEPSVQIIGVEAGGHGVHTDKHAASLNGGVPGVLHGNRTYLLQDQDGQITDAHSISAGLDYPGIGPEHAYLHEVKRVEYVSITDDEALDAFHATCRLEGIIPALESSHALAEAIKRAPKLPKDHLMVVCLSGRGDKDMQTVMNHMAAQEKHA.

The residue at position 95 (K95) is an N6-(pyridoxal phosphate)lysine.

Belongs to the TrpB family. As to quaternary structure, tetramer of two alpha and two beta chains. Requires pyridoxal 5'-phosphate as cofactor.

It catalyses the reaction (1S,2R)-1-C-(indol-3-yl)glycerol 3-phosphate + L-serine = D-glyceraldehyde 3-phosphate + L-tryptophan + H2O. It functions in the pathway amino-acid biosynthesis; L-tryptophan biosynthesis; L-tryptophan from chorismate: step 5/5. The beta subunit is responsible for the synthesis of L-tryptophan from indole and L-serine. The sequence is that of Tryptophan synthase beta chain from Pseudomonas putida (strain ATCC 700007 / DSM 6899 / JCM 31910 / BCRC 17059 / LMG 24140 / F1).